The chain runs to 211 residues: Small ribosomal subunit protein uS4 (211 aa).

The S4 RNA-binding domain occupies 98-161; that stretch reads RRLDNVVYRL…RDIPFIKENL (64 aa).

This sequence belongs to the universal ribosomal protein uS4 family. Part of the 30S ribosomal subunit. Contacts protein S5. The interaction surface between S4 and S5 is involved in control of translational fidelity.

In terms of biological role, one of the primary rRNA binding proteins, it binds directly to 16S rRNA where it nucleates assembly of the body of the 30S subunit. With S5 and S12 plays an important role in translational accuracy. The protein is Small ribosomal subunit protein uS4 of Aquifex aeolicus (strain VF5).